We begin with the raw amino-acid sequence, 1082 residues long: Neisserial autotransporter lipoprotein NalP (1082 aa).

The first 27 residues, 1–27, serve as a signal peptide directing secretion; sequence MRTTPTFPTKTFKPTAMALAVATTLSA. C28 carries N-palmitoyl cysteine lipidation. C28 is lipidated: S-diacylglycerol cysteine. In terms of domain architecture, Peptidase S8 spans 110–482; it reads NDAYKNLINL…WGLLDAGKAM (373 aa). Residues D138, H210, and S426 each act as charge relay system in the active site. Residues 808–1082 enclose the Autotransporter domain; the sequence is DGLDHNGTGL…SGRVGVGYRF (275 aa).

Belongs to the peptidase S8 family. In terms of processing, probably auto-processes to yield a 68-70 kDa form and a C-terminal 30 kDa translocator domain; upon overexpression in situ and in E.coli full-length protein is seen as well as (probably) auto-processed forms of 68-70 kDa and 30 kDa in size, suggesting this may have protease activity.

It is found in the cell outer membrane. The protein localises to the cell surface. It localises to the secreted. The protein resides in the host cytoplasm. Its subcellular location is the host perinuclear region. With respect to regulation, cleavage of host complement factor C3 is inhibited by PMSF. In terms of biological role, major human immunogenic protein, detected in patients recovering from meningitidis. Autotransporter with a secreted protease domain involved in processing other autotransporter proteins including App, IgA, LbpB and NHBA. Probably autoprocesses to release the about 70 kDa passenger domain. Both cell surface protein (Neisserial autotransporter lipoprotein NalP) and the passenger domain cleave human (host) complement factor C3, generating a shorter alpha chain and a longer beta chain than normal. Uptake of a passenger domain fragment (residues 101-784) by human cells increases cell metabolic activity; the serine protease activity is required for this increase. Functionally, cleaves human (host) complement factor C3, generating a shorter alpha chain and a longer beta chain than normal. Does not act on mouse or rabbit C3. Cleavage causes C3b degradation by human CFI and CFH, and thus decreases deposition of C3b on the bacteria surface and probably facilitates complement escape. Its function is as follows. Plays a role in extracellular-DNA (eDNA) mediated biofilm formation. In some strains (including cc32 strain MC58) eDNA stimulates biofilm formation. When NalP is not expressed (and no longer processes NHBA or IgA) biofilm formation increases. This Neisseria meningitidis serogroup B (strain ATCC BAA-335 / MC58) protein is Neisserial autotransporter lipoprotein NalP.